We begin with the raw amino-acid sequence, 208 residues long: Uracil phosphoribosyltransferase (208 aa).

5-phospho-alpha-D-ribose 1-diphosphate-binding positions include R78, R103, and 130 to 138 (DPMLATGGT). Residues I193 and 198 to 200 (GDA) each bind uracil. D199 is a binding site for 5-phospho-alpha-D-ribose 1-diphosphate.

It belongs to the UPRTase family. Requires Mg(2+) as cofactor.

The enzyme catalyses UMP + diphosphate = 5-phospho-alpha-D-ribose 1-diphosphate + uracil. It participates in pyrimidine metabolism; UMP biosynthesis via salvage pathway; UMP from uracil: step 1/1. With respect to regulation, allosterically activated by GTP. In terms of biological role, catalyzes the conversion of uracil and 5-phospho-alpha-D-ribose 1-diphosphate (PRPP) to UMP and diphosphate. The polypeptide is Uracil phosphoribosyltransferase (Maridesulfovibrio salexigens (strain ATCC 14822 / DSM 2638 / NCIMB 8403 / VKM B-1763) (Desulfovibrio salexigens)).